The sequence spans 192 residues: MSEITLPEYQSIAAELQSASLAVTPAELHGLLVGMLSGGLAINDQTWQPILFDYTNDGMGWPTTALAFAQTVFKVTANELTGSSMELSLLLPDESGEEGLFALADSLSDFVNHFISGLGLAGIALNNASDDAKEALADLEEIAKLGIDEDDDFGEQAQLLEQVIEHVKACVLTIHAEFGARPESSESKPTIH.

Belongs to the UPF0149 family.

In Vibrio parahaemolyticus serotype O3:K6 (strain RIMD 2210633), this protein is UPF0149 protein VP2588.